We begin with the raw amino-acid sequence, 557 residues long: Potassium-transporting ATPase potassium-binding subunit (557 aa).

Helical transmembrane passes span 5-25 (GFLL…PLGS), 63-83 (LCAI…MLLG), 132-152 (GLTV…FALI), 170-190 (LLRI…LFFI), 253-273 (FVQM…FGEV), 283-303 (LLWA…WAEV), 329-349 (VLVS…AVIA), 356-376 (ALGG…FGGV), 379-399 (GLYG…LMIG), 416-436 (LTAL…ALAM), 484-504 (LLAL…MAIA), and 526-546 (LFVG…FIPA).

The protein belongs to the KdpA family. As to quaternary structure, the system is composed of three essential subunits: KdpA, KdpB and KdpC.

It localises to the cell inner membrane. Functionally, part of the high-affinity ATP-driven potassium transport (or Kdp) system, which catalyzes the hydrolysis of ATP coupled with the electrogenic transport of potassium into the cytoplasm. This subunit binds the periplasmic potassium ions and delivers the ions to the membrane domain of KdpB through an intramembrane tunnel. In Escherichia coli O81 (strain ED1a), this protein is Potassium-transporting ATPase potassium-binding subunit.